A 318-amino-acid polypeptide reads, in one-letter code: Ribose-phosphate pyrophosphokinase 2 (318 aa).

96 to 101 provides a ligand contact to ATP; the sequence is RQDKKD. Residues Asp128, His130, Asp139, and Asp143 each contribute to the Mg(2+) site. Residue His130 coordinates ATP. The segment at 212-227 is binding of phosphoribosylpyrophosphate; the sequence is KDRVAILVDDMADTCG.

Belongs to the ribose-phosphate pyrophosphokinase family. In terms of assembly, homodimer. The active form is probably a hexamer composed of 3 homodimers. Requires Mg(2+) as cofactor.

It carries out the reaction D-ribose 5-phosphate + ATP = 5-phospho-alpha-D-ribose 1-diphosphate + AMP + H(+). The protein operates within metabolic intermediate biosynthesis; 5-phospho-alpha-D-ribose 1-diphosphate biosynthesis; 5-phospho-alpha-D-ribose 1-diphosphate from D-ribose 5-phosphate (route I): step 1/1. Its activity is regulated as follows. Activated by magnesium and inorganic phosphate. Catalyzes the synthesis of phosphoribosylpyrophosphate (PRPP) that is essential for nucleotide synthesis. The chain is Ribose-phosphate pyrophosphokinase 2 (Prps2) from Rattus norvegicus (Rat).